The following is a 410-amino-acid chain: MEDGVYEPPDLTPEERMELENIRRRKQELLVEIQRLREELSEAMSEVEGLEANEGSKTLQRNRKMAMGRKKFNMDPKKGIQFLVENELLQNTPEEIARFLYKGEGLNKTAIGDYLGEREELNLAVLHAFVDLHEFTDLNLVQALRQFLWSFRLPGEAQKIDRMMEAFAQRYCLCNPGVFQSTDTCYVLSFAVIMLNTSLHNPNVRDKPGLERFVAMNRGINEGGDLPEELLRNLYDSIRNEPFKIPEDDGNDLTHTFFNPDREGWLLKLGAQAPSPPSLPGGRVKTWKRRWFILTDNCLYYFEYTTDKEPRGIIPLENLSIREVDDPRKPNCFELYIPNNKGQLIKACKTEADGRVVEGNHMVYRISAPTQEEKDEWIKSIQAAVSVDPFYEMLAARKKRISVKKKQEQP.

Residues 13 to 56 (PEERMELENIRRRKQELLVEIQRLREELSEAMSEVEGLEANEGS) adopt a coiled-coil conformation. Residues 54 to 241 (EGSKTLQRNR…RNLYDSIRNE (188 aa)) enclose the SEC7 domain. One can recognise a PH domain in the interval 259–386 (NPDREGWLLK…WIKSIQAAVS (128 aa)). A 1,2-diacyl-sn-glycero-3-phospho-(1D-myo-inositol-3,4,5-trisphosphate)-binding positions include 268-271 (KLGA), Arg-290, Tyr-301, Arg-311, Lys-349, Asn-360, and His-361. Residues 397-405 (RKKRISVKK) form a C-terminal autoinhibitory region region.

As to quaternary structure, heteromer. Composed of TAMALIN, CYTH2 and at least one GRM1. Interacts with ARRB1. Interacts with ARL4D; the interaction is direct. Directly interacts with CCDC120 through the coiled coil domain; this interaction stabilizes CCDC120, possibly by preventing its ubiquitination, and is required for neurite growth in neuroblastoma cells. Interacts (via N-terminal domain) with INAVA (via N-terminal domain).

The protein localises to the cell membrane. It is found in the cytoplasm. It localises to the cell projection. The protein resides in the growth cone. Its function is as follows. Acts as a guanine-nucleotide exchange factor (GEF). Promotes guanine-nucleotide exchange on ARF1, ARF3 and ARF6. Promotes the activation of ARF factors through replacement of GDP with GTP. The cell membrane form, in association with ARL4 proteins, recruits ARF6 to the plasma membrane. Involved in neurite growth. The chain is Cytohesin-2 (CYTH2) from Bos taurus (Bovine).